The sequence spans 52 residues: Eukaryotic translation initiation factor 5A (52 aa).

K42 carries the hypusine modification.

Belongs to the eIF-5A family. Post-translationally, lys-42 undergoes hypusination, a unique post-translational modification that consists in the addition of a butylamino group from spermidine to lysine side chain, leading to the formation of the unusual amino acid hypusine. eIF-5As are the only known proteins to undergo this modification, which is essential for their function.

It localises to the cytoplasm. In terms of biological role, translation factor that promotes translation elongation and termination, particularly upon ribosome stalling at specific amino acid sequence contexts. Binds between the exit (E) and peptidyl (P) site of the ribosome and promotes rescue of stalled ribosome: specifically required for efficient translation of polyproline-containing peptides as well as other motifs that stall the ribosome. Acts as a ribosome quality control (RQC) cofactor by joining the RQC complex to facilitate peptidyl transfer during CAT tailing step. This chain is Eukaryotic translation initiation factor 5A, found in Schistosoma mansoni (Blood fluke).